A 617-amino-acid polypeptide reads, in one-letter code: Na(+)/H(+) antiporter NhaA 1 (617 aa).

Residues 1 to 26 (MTVTEPATQRGFPLLPSRLSRGSKAT) form a disordered region. A na(+)/H(+) antiporter NhaA region spans residues 1–433 (MTVTEPATQR…GWAIFRITDW (433 aa)). 11 helical membrane passes run 33-53 (AAALLLTFTVVAILWANSPWA), 75-95 (MTVKHVVNDALMTFFFFIVGL), 113-133 (AVPVVAAAAGLILPAVVFLAF), 141-161 (HAWGVVISTDTAFLVGALAII), 171-191 (LFLLTLAVVDDVGALIAIAVL), 198-218 (VAPLVVAVALLGALALVRYLP), 234-254 (IALYLAGIHPTLAGVAVALLI), 304-324 (VSPVVSFVILPLFALVNAGVL), 341-361 (GIVAGLVVGKFVGIAGATWLI), 378-398 (IAGGAALSGIGFTISLFIVDI), and 411-431 (IGVLAASVLAFALGWAIFRIT). Residues 434–617 (LSPPEPVGLK…LIRALEAGRG (184 aa)) form the Thioredoxin domain.

It in the N-terminal section; belongs to the NhaA Na(+)/H(+) (TC 2.A.33) antiporter family.

Its subcellular location is the cell membrane. The catalysed reaction is Na(+)(in) + 2 H(+)(out) = Na(+)(out) + 2 H(+)(in). Its function is as follows. Na(+)/H(+) antiporter that extrudes sodium in exchange for external protons. This is Na(+)/H(+) antiporter NhaA 1 from Mycolicibacterium gilvum (strain PYR-GCK) (Mycobacterium gilvum (strain PYR-GCK)).